The sequence spans 239 residues: Metallo-beta-lactamase IND-1 (239 aa).

The first 20 residues, 1 to 20 (MKKSIRFFIVSILLSPFASA), serve as a signal peptide directing secretion. 5 residues coordinate Zn(2+): histidine 96, histidine 98, aspartate 100, histidine 159, and cysteine 178. Residue lysine 181 coordinates a beta-lactam. Histidine 220 provides a ligand contact to Zn(2+).

The protein belongs to the metallo-beta-lactamase superfamily. Class-B beta-lactamase family. Monomer. The cofactor is Zn(2+).

It localises to the periplasm. The enzyme catalyses a beta-lactam + H2O = a substituted beta-amino acid. With respect to regulation, inhibited by chelating agents such as EDTA. Not susceptible to inactivation by the beta-lactamase-blocking agent clavulanic acid. Class B beta-lactamase which confers resistance to the beta-lactam antibiotics, including penicillins, cephalosporins and carbapenems. Acts via hydrolysis of the beta-lactam ring. Has penicillin-, cephalosporin- and carbapenem-hydrolyzing activities. This is Metallo-beta-lactamase IND-1 from Chryseobacterium indologenes (Flavobacterium indologenes).